The chain runs to 365 residues: Protein mab-21-like (365 aa).

This sequence belongs to the mab-21 family.

This chain is Protein mab-21-like, found in Anopheles gambiae (African malaria mosquito).